The primary structure comprises 548 residues: MHKGKKNYPNLITSFRMNLKKIILNHDRFSHPERWKTNALLRFTFVYIKFLFDLMIIKNPLRMVGKTNRDAVTALNSLQSNYANIMAIRQTGDRKNTMTLLEMHEWSRRIGYSASDFNKLNIVHITGTKGKGSTAAFTSSILGQYKEQLPRIGLYTSPHLKSVRERIRINGEPISEEKFAKYFFEVWDRLDSTTSSLDKFPHMIPGSKPGYFKFLTLLSFHTFIQEDCKSCVYEVGVGGELDSTNIIEKPIVCGVTLLGIDHTFMLGDTIEEIAWNKGGIFKSGAPAFTVEKQPPQGLTILKERAEERKTTLTEVPPFKQLENVKLGIAGEFQKSNASLAVMLASEILHTSNILEEKIKCSSNASIPEKFIIGLQNTKWEGRCQVLEKGKNVWYIDGAHTKDSMVAASTWFRDMVRLSKRKKILLFNQQSRDANALVNNLYSSVSPEITFDDVIFTTNVTWKSGSYSADLVSMNTSQEDVEKLKVQESLVKNWNKIDDNRAKTHVTASIEEANELIETLYDEPADIFVTGSLHLVGGLLVVFDRIDVK.

130 to 133 (GKGS) lines the ATP pocket. The Mg(2+) site is built by S157, E234, and H262. R382 and D396 together coordinate ATP.

It belongs to the folylpolyglutamate synthase family. Requires a monovalent cation as cofactor.

It localises to the mitochondrion inner membrane. The protein localises to the mitochondrion matrix. Its subcellular location is the cytoplasm. It catalyses the reaction (6S)-5,6,7,8-tetrahydrofolyl-(gamma-L-Glu)(n) + L-glutamate + ATP = (6S)-5,6,7,8-tetrahydrofolyl-(gamma-L-Glu)(n+1) + ADP + phosphate + H(+). Its pathway is cofactor biosynthesis; tetrahydrofolylpolyglutamate biosynthesis. Catalyzes conversion of folates to polyglutamate derivatives allowing concentration of folate compounds in the cell and the intracellular retention of these cofactors, which are important substrates for most of the folate-dependent enzymes that are involved in one-carbon transfer reactions involved in purine, pyrimidine and amino acid synthesis. Required for methionine synthesis and maintenance of intact mitochondrial DNA. Involved in telomere maintenance. This Saccharomyces cerevisiae (strain AWRI1631) (Baker's yeast) protein is Folylpolyglutamate synthase.